The sequence spans 542 residues: Glucose-6-phosphate isomerase (542 aa).

Catalysis depends on Glu354, which acts as the Proton donor. Active-site residues include His385 and Lys505.

The protein belongs to the GPI family.

It is found in the cytoplasm. The catalysed reaction is alpha-D-glucose 6-phosphate = beta-D-fructose 6-phosphate. It participates in carbohydrate biosynthesis; gluconeogenesis. The protein operates within carbohydrate degradation; glycolysis; D-glyceraldehyde 3-phosphate and glycerone phosphate from D-glucose: step 2/4. Catalyzes the reversible isomerization of glucose-6-phosphate to fructose-6-phosphate. The sequence is that of Glucose-6-phosphate isomerase from Nitrosospira multiformis (strain ATCC 25196 / NCIMB 11849 / C 71).